The primary structure comprises 298 residues: ATP synthase gamma chain (298 aa).

Belongs to the ATPase gamma chain family. In terms of assembly, F-type ATPases have 2 components, CF(1) - the catalytic core - and CF(0) - the membrane proton channel. CF(1) has five subunits: alpha(3), beta(3), gamma(1), delta(1), epsilon(1). CF(0) has three main subunits: a, b and c.

The protein resides in the cell inner membrane. In terms of biological role, produces ATP from ADP in the presence of a proton gradient across the membrane. The gamma chain is believed to be important in regulating ATPase activity and the flow of protons through the CF(0) complex. In Zymomonas mobilis subsp. mobilis (strain ATCC 31821 / ZM4 / CP4), this protein is ATP synthase gamma chain.